We begin with the raw amino-acid sequence, 140 residues long: uncharacterized protein (140 aa).

This sequence belongs to the MG439/MG440 family.

This is an uncharacterized protein from Mycoplasma pneumoniae (strain ATCC 29342 / M129 / Subtype 1) (Mycoplasmoides pneumoniae).